Here is a 671-residue protein sequence, read N- to C-terminus: Preterminal protein (671 aa).

A Nuclear localization signal motif is present at residues 380 to 389 (RLPVRRRRRR). The disordered stretch occupies residues 386–411 (RRRRVPPPPPPPEEEEGEALMEEEIE). A compositionally biased stretch (acidic residues) spans 397 to 411 (PEEEEGEALMEEEIE). Ser-580 carries the O-(5'-phospho-DNA)-serine modification. The segment at 645 to 671 (GADVPLPPLPAGPEPPLPPGARPRHRF) is disordered. A compositionally biased stretch (pro residues) spans 649-665 (PLPPLPAGPEPPLPPGA).

The protein belongs to the adenoviridae terminal protein family. As to quaternary structure, heterodimer with the polymerase; this heterodimer binds to bp 9 to 18 of the genome. Interacts with host POU2F1; POU2F1 binds to the auxiliary sequences in the inverted terminal repeats and tethers the pTP-POL heterodimer to the origin DNA thereby participating in the assembly of the pre-initiation complex (POL-TP-DBP-NFIA-POU2F1). Preterminal protein is used to replicate viral genome, upon genomic encapsidation it is processed first into iTP and finally into TP by adenovirus protease.

It localises to the host nucleus matrix. Functionally, protein covalently bound to the viral DNA that acts as a primer for viral genomic replication by DNA strand displacement. Assembles on the viral origin of replication in an initiation complex with viral polymerase, DBP, host NFIA and host POU2F1/OCT1. During initiation, the polymerase covalently couples the first dCTP with Ser-580 of pTP. The terminal protein stimulates the template activity over 20 fold compared to protein-free templates. Neo-synthesized viral genomes are linked to two preterminal proteins, one for each 5' end. These new genomes are encapsidated in the nucleus, and during capsid maturation by viral protease, preterminal protein is first cleaved into intermediary (iTP), then into mature TP. May play a role in host nuclear matrix localization of genomic DNA. The chain is Preterminal protein from Human adenovirus C serotype 5 (HAdV-5).